Reading from the N-terminus, the 628-residue chain is Alpha-L-arabinofuranosidase A (628 aa).

The first 25 residues, 1 to 25, serve as a signal peptide directing secretion; sequence MVAFSALSGVSAVSLLLSLVQNAHG. Asparagine 36, asparagine 51, asparagine 74, asparagine 152, asparagine 171, asparagine 260, asparagine 359, asparagine 440, asparagine 493, and asparagine 610 each carry an N-linked (GlcNAc...) asparagine glycan.

Belongs to the glycosyl hydrolase 51 family.

The enzyme catalyses Hydrolysis of terminal non-reducing alpha-L-arabinofuranoside residues in alpha-L-arabinosides.. Its pathway is glycan metabolism; L-arabinan degradation. In terms of biological role, acts only on small linear 1,5-alpha-linked L-arabinofuranosyl oligosaccharides. The protein is Alpha-L-arabinofuranosidase A (abfA) of Aspergillus niger.